We begin with the raw amino-acid sequence, 230 residues long: Cytochrome c oxidase subunit 2 (230 aa).

Topologically, residues 1 to 14 (MAHPSQLGFQDAAS) are mitochondrial intermembrane. The helical transmembrane segment at 15–45 (PVMEELLHFHDHALMIVFLISTLVLYIIVAM) threads the bilayer. Residues 46–59 (VSTKLTNKYILDSQ) lie on the Mitochondrial matrix side of the membrane. Residues 60–87 (EIEIIWTVLPAVILILIALPSLRILYLM) traverse the membrane as a helical segment. Residues 88-230 (DEINDPHLTI…SWSSLMLEDA (143 aa)) lie on the Mitochondrial intermembrane side of the membrane. Cu cation is bound by residues His-161, Cys-196, Glu-198, Cys-200, His-204, and Met-207. Position 198 (Glu-198) interacts with Mg(2+).

It belongs to the cytochrome c oxidase subunit 2 family. As to quaternary structure, component of the cytochrome c oxidase (complex IV, CIV), a multisubunit enzyme composed of 14 subunits. The complex is composed of a catalytic core of 3 subunits MT-CO1, MT-CO2 and MT-CO3, encoded in the mitochondrial DNA, and 11 supernumerary subunits COX4I, COX5A, COX5B, COX6A, COX6B, COX6C, COX7A, COX7B, COX7C, COX8 and NDUFA4, which are encoded in the nuclear genome. The complex exists as a monomer or a dimer and forms supercomplexes (SCs) in the inner mitochondrial membrane with NADH-ubiquinone oxidoreductase (complex I, CI) and ubiquinol-cytochrome c oxidoreductase (cytochrome b-c1 complex, complex III, CIII), resulting in different assemblies (supercomplex SCI(1)III(2)IV(1) and megacomplex MCI(2)III(2)IV(2)). Found in a complex with TMEM177, COA6, COX18, COX20, SCO1 and SCO2. Interacts with TMEM177 in a COX20-dependent manner. Interacts with COX20. Interacts with COX16. The cofactor is Cu cation.

The protein localises to the mitochondrion inner membrane. The catalysed reaction is 4 Fe(II)-[cytochrome c] + O2 + 8 H(+)(in) = 4 Fe(III)-[cytochrome c] + 2 H2O + 4 H(+)(out). Component of the cytochrome c oxidase, the last enzyme in the mitochondrial electron transport chain which drives oxidative phosphorylation. The respiratory chain contains 3 multisubunit complexes succinate dehydrogenase (complex II, CII), ubiquinol-cytochrome c oxidoreductase (cytochrome b-c1 complex, complex III, CIII) and cytochrome c oxidase (complex IV, CIV), that cooperate to transfer electrons derived from NADH and succinate to molecular oxygen, creating an electrochemical gradient over the inner membrane that drives transmembrane transport and the ATP synthase. Cytochrome c oxidase is the component of the respiratory chain that catalyzes the reduction of oxygen to water. Electrons originating from reduced cytochrome c in the intermembrane space (IMS) are transferred via the dinuclear copper A center (CU(A)) of subunit 2 and heme A of subunit 1 to the active site in subunit 1, a binuclear center (BNC) formed by heme A3 and copper B (CU(B)). The BNC reduces molecular oxygen to 2 water molecules using 4 electrons from cytochrome c in the IMS and 4 protons from the mitochondrial matrix. This Gadus morhua (Atlantic cod) protein is Cytochrome c oxidase subunit 2 (mt-co2).